A 448-amino-acid chain; its full sequence is Squalene synthase ERG9 (448 aa).

A helical transmembrane segment spans residues 420 to 440 (RIEPGNFNCNVVLFGIGALIL).

This sequence belongs to the phytoene/squalene synthase family. Mg(2+) is required as a cofactor.

It is found in the endoplasmic reticulum membrane. It localises to the microsome. The enzyme catalyses 2 (2E,6E)-farnesyl diphosphate + NADPH + H(+) = squalene + 2 diphosphate + NADP(+). The catalysed reaction is 2 (2E,6E)-farnesyl diphosphate + NADH + H(+) = squalene + 2 diphosphate + NAD(+). Its pathway is terpene metabolism; lanosterol biosynthesis; lanosterol from farnesyl diphosphate: step 1/3. Functionally, squalene synthase; part of the third module of ergosterol biosynthesis pathway that includes the late steps of the pathway. ERG9 produces squalene from 2 farnesyl pyrophosphate moieties. The third module or late pathway involves the ergosterol synthesis itself through consecutive reactions that mainly occur in the endoplasmic reticulum (ER) membrane. Firstly, the squalene synthase ERG9 catalyzes the condensation of 2 farnesyl pyrophosphate moieties to form squalene, which is the precursor of all steroids. Squalene synthase is crucial for balancing the incorporation of farnesyl diphosphate (FPP) into sterol and nonsterol isoprene synthesis. Secondly, the squalene epoxidase ERG1 catalyzes the stereospecific oxidation of squalene to (S)-2,3-epoxysqualene, which is considered to be a rate-limiting enzyme in steroid biosynthesis. Then, the lanosterol synthase ERG7 catalyzes the cyclization of (S)-2,3 oxidosqualene to lanosterol, a reaction that forms the sterol core. In the next steps, lanosterol is transformed to zymosterol through a complex process involving various demethylation, reduction and desaturation reactions. The lanosterol 14-alpha-demethylase ERG11 (also known as CYP51) catalyzes C14-demethylation of lanosterol to produce 4,4'-dimethyl cholesta-8,14,24-triene-3-beta-ol, which is critical for ergosterol biosynthesis. The C-14 reductase ERG24 reduces the C14=C15 double bond of 4,4-dimethyl-cholesta-8,14,24-trienol to produce 4,4-dimethyl-cholesta-8,24-dienol. 4,4-dimethyl-cholesta-8,24-dienol is substrate of the C-4 demethylation complex ERG25-ERG26-ERG27 in which ERG25 catalyzes the three-step monooxygenation required for the demethylation of 4,4-dimethyl and 4alpha-methylsterols, ERG26 catalyzes the oxidative decarboxylation that results in a reduction of the 3-beta-hydroxy group at the C-3 carbon to an oxo group, and ERG27 is responsible for the reduction of the keto group on the C-3. ERG28 has a role as a scaffold to help anchor ERG25, ERG26 and ERG27 to the endoplasmic reticulum and ERG29 regulates the activity of the iron-containing C4-methylsterol oxidase ERG25. Then, the sterol 24-C-methyltransferase ERG6 catalyzes the methyl transfer from S-adenosyl-methionine to the C-24 of zymosterol to form fecosterol. The C-8 sterol isomerase ERG2 catalyzes the reaction which results in unsaturation at C-7 in the B ring of sterols and thus converts fecosterol to episterol. The sterol-C5-desaturase ERG3 then catalyzes the introduction of a C-5 double bond in the B ring to produce 5-dehydroepisterol. The C-22 sterol desaturase ERG5 further converts 5-dehydroepisterol into ergosta-5,7,22,24(28)-tetraen-3beta-ol by forming the C-22(23) double bond in the sterol side chain. Finally, ergosta-5,7,22,24(28)-tetraen-3beta-ol is substrate of the C-24(28) sterol reductase ERG4 to produce ergosterol. The chain is Squalene synthase ERG9 from Candida albicans (Yeast).